A 454-amino-acid chain; its full sequence is Glycosyl hydrolase family 109 protein (454 aa).

The segment at residues 1–29 (MFAMKRREFIAASAAVAASSLLPQTPAWA) is a signal peptide (tat-type signal). Residues 43-44 (MR), D65, 116-119 (WEYH), 136-137 (EV), and N165 each bind NAD(+). Residue Y194 coordinates substrate. 224–228 (SEARW) contributes to the NAD(+) binding site. Substrate contacts are provided by residues R229, 241–244 (YPSH), and Y324. An NAD(+)-binding site is contributed by Y241.

Belongs to the Gfo/Idh/MocA family. Glycosyl hydrolase 109 subfamily. It depends on NAD(+) as a cofactor. In terms of processing, predicted to be exported by the Tat system. The position of the signal peptide cleavage has not been experimentally proven.

Functionally, glycosidase. The protein is Glycosyl hydrolase family 109 protein of Stenotrophomonas maltophilia (strain K279a).